The sequence spans 151 residues: Probable transport accessory protein MmpS1 (151 aa).

Transmembrane regions (helical) follow at residues 8–28 (FWIPMVIVIVVAVAAVTVSRL) and 81–101 (VVNAAVPWSFTIVTTLTAVVA).

It belongs to the MmpS family.

The protein resides in the cell membrane. This is Probable transport accessory protein MmpS1 (mmpS1) from Mycobacterium tuberculosis (strain CDC 1551 / Oshkosh).